The following is a 574-amino-acid chain: Probable inactive serine/threonine-protein kinase slob2 (574 aa).

A helical transmembrane segment spans residues 6-26 (YIIIAAVGGFAILTFIIIVVL). The 181-residue stretch at 166–346 (YADRGSLRDF…PLHRLTYTSR (181 aa)) folds into the Protein kinase domain. N-linked (GlcNAc...) asparagine glycosylation is present at asparagine 358. The segment at 366 to 386 (SKPNSKDLSQPKLKDLKKQKK) is disordered. Residues asparagine 440, asparagine 449, asparagine 453, asparagine 456, asparagine 464, asparagine 470, asparagine 477, and asparagine 483 are each glycosylated (N-linked (GlcNAc...) asparagine). A compositionally biased stretch (low complexity) spans 450–493 (TTTNTTNTSTSSSLNSSFNSNVSTSYSNATTTTNTTSASSVSPP). Residues 450 to 574 (TTTNTTNTST…DKSGPLLKKS (125 aa)) form a disordered region. Over residues 494-539 (ISSPPPPPPPPPPSKSSGPPPPPPPPPKSSGPPPPPPPKSSPPPPA) the composition is skewed to pro residues. Positions 546-556 (LLSSIESFSSS) are enriched in low complexity.

The protein belongs to the protein kinase superfamily. Ser/Thr protein kinase family.

The protein localises to the membrane. The protein is Probable inactive serine/threonine-protein kinase slob2 (slob2) of Dictyostelium discoideum (Social amoeba).